The primary structure comprises 432 residues: 3-phosphoshikimate 1-carboxyvinyltransferase (432 aa).

Positions 23, 24, and 28 each coordinate 3-phosphoshikimate. Lys23 lines the phosphoenolpyruvate pocket. 2 residues coordinate phosphoenolpyruvate: Gly95 and Arg123. 3-phosphoshikimate contacts are provided by Ser167, Gln169, Asp317, and Lys344. Gln169 lines the phosphoenolpyruvate pocket. Asp317 (proton acceptor) is an active-site residue. Arg348 and Arg390 together coordinate phosphoenolpyruvate.

The protein belongs to the EPSP synthase family. Monomer.

It localises to the cytoplasm. The enzyme catalyses 3-phosphoshikimate + phosphoenolpyruvate = 5-O-(1-carboxyvinyl)-3-phosphoshikimate + phosphate. It functions in the pathway metabolic intermediate biosynthesis; chorismate biosynthesis; chorismate from D-erythrose 4-phosphate and phosphoenolpyruvate: step 6/7. Catalyzes the transfer of the enolpyruvyl moiety of phosphoenolpyruvate (PEP) to the 5-hydroxyl of shikimate-3-phosphate (S3P) to produce enolpyruvyl shikimate-3-phosphate and inorganic phosphate. This chain is 3-phosphoshikimate 1-carboxyvinyltransferase, found in Staphylococcus aureus (strain JH9).